The chain runs to 21 residues: Trypsin (21 aa).

A propeptide spans F1–K7 (activation peptide). Residues I8–W21 enclose the Peptidase S1 domain.

This sequence belongs to the peptidase S1 family.

The protein resides in the secreted. The protein localises to the extracellular space. The enzyme catalyses Preferential cleavage: Arg-|-Xaa, Lys-|-Xaa.. In Protopterus aethiopicus (Marbled lungfish), this protein is Trypsin.